The chain runs to 529 residues: Zinc finger protein 572 (529 aa).

A disordered region spans residues 1–125 (MEQEQKLLVS…TGPAGQQNPS (125 aa)). Lys6 participates in a covalent cross-link: Glycyl lysine isopeptide (Lys-Gly) (interchain with G-Cter in SUMO2). The segment covering 22-42 (KNTITGDESKNNLKTVQFSNS) has biased composition (polar residues). Basic and acidic residues predominate over residues 43–68 (KADKERASKWSRSDGPENYKDEDTKE). The segment covering 87–96 (NDSNLGSQRN) has biased composition (polar residues). 12 consecutive C2H2-type zinc fingers follow at residues 131 to 153 (YKCSECWKSFSNSSHLRIHQRTH), 159 to 181 (YRCSECGKCFSNSSHLIQHLRTH), 187 to 209 (YQCGECGKSFSNTSHLIIHERTH), 215 to 237 (YKCPECAKSLSSSSHLIQHHRSH), 243 to 265 (YECPLCGKCFSHSYVLVEHQRTH), 271 to 293 (YKCPDCGKSFSQSSSLIRHQRTH), 299 to 321 (YKCPECGKGFGCNSTLIKHQRIH), 327 to 349 (YQCIECGKNFSRSSNLVTHQKMH), 383 to 405 (YKCCECGKSFGLSSHLIRHQRTH), 411 to 433 (YRCSECWKTFSQSSTLVIHQRTH), 439 to 461 (YKCPDCGECFSQSFNLIRHRRTH), and 467 to 489 (YKCTDCEKCFSRSAYLSQHRKIH).

This sequence belongs to the krueppel C2H2-type zinc-finger protein family.

The protein localises to the nucleus. Its function is as follows. May be involved in transcriptional regulation. The polypeptide is Zinc finger protein 572 (ZNF572) (Bos taurus (Bovine)).